Here is a 312-residue protein sequence, read N- to C-terminus: Metaxin-1 homolog (312 aa).

The chain crosses the membrane as a helical span at residues 282–302 (ILFTIGALVLSVAFAIHTGLI).

The protein belongs to the metaxin family. As to quaternary structure, associates with the mitochondrial contact site and cristae organizing system (MICOS) complex (also known as MINOS or MitOS complex).

Its subcellular location is the mitochondrion outer membrane. Its function is as follows. Involved in transport of proteins into the mitochondrion. Essential for embryonic development. The chain is Metaxin-1 homolog from Caenorhabditis briggsae.